Reading from the N-terminus, the 210-residue chain is Imidazoleglycerol-phosphate dehydratase (210 aa).

Belongs to the imidazoleglycerol-phosphate dehydratase family.

It catalyses the reaction D-erythro-1-(imidazol-4-yl)glycerol 3-phosphate = 3-(imidazol-4-yl)-2-oxopropyl phosphate + H2O. Its pathway is amino-acid biosynthesis; L-histidine biosynthesis; L-histidine from 5-phospho-alpha-D-ribose 1-diphosphate: step 6/9. The polypeptide is Imidazoleglycerol-phosphate dehydratase (HIS3) (Candida glabrata (strain ATCC 2001 / BCRC 20586 / JCM 3761 / NBRC 0622 / NRRL Y-65 / CBS 138) (Yeast)).